We begin with the raw amino-acid sequence, 617 residues long: Proline--tRNA ligase (617 aa).

It belongs to the class-II aminoacyl-tRNA synthetase family. ProS type 1 subfamily. Homodimer.

The protein resides in the cytoplasm. The enzyme catalyses tRNA(Pro) + L-proline + ATP = L-prolyl-tRNA(Pro) + AMP + diphosphate. Catalyzes the attachment of proline to tRNA(Pro) in a two-step reaction: proline is first activated by ATP to form Pro-AMP and then transferred to the acceptor end of tRNA(Pro). As ProRS can inadvertently accommodate and process non-cognate amino acids such as alanine and cysteine, to avoid such errors it has two additional distinct editing activities against alanine. One activity is designated as 'pretransfer' editing and involves the tRNA(Pro)-independent hydrolysis of activated Ala-AMP. The other activity is designated 'posttransfer' editing and involves deacylation of mischarged Ala-tRNA(Pro). The misacylated Cys-tRNA(Pro) is not edited by ProRS. In Streptococcus pneumoniae (strain P1031), this protein is Proline--tRNA ligase.